The sequence spans 214 residues: Adenylate kinase (214 aa).

Residue 10–15 (GAGKGT) coordinates ATP. Residues 30–59 (STGDMFREAVASKSELGKKVEEILKRGDLV) form an NMP region. AMP contacts are provided by residues T31, R36, 57–59 (DLV), 85–88 (GFPR), and Q92. The LID stretch occupies residues 126–163 (NRRICSNCGKIYNLITLPPKVDGKCDVCGGTLYQREDD). R127 contacts ATP. Residues C130 and C133 each contribute to the Zn(2+) site. Residue 136 to 137 (IY) participates in ATP binding. Positions 150 and 153 each coordinate Zn(2+). AMP contacts are provided by R160 and R171. L199 provides a ligand contact to ATP.

Belongs to the adenylate kinase family. Monomer.

The protein localises to the cytoplasm. It catalyses the reaction AMP + ATP = 2 ADP. It participates in purine metabolism; AMP biosynthesis via salvage pathway; AMP from ADP: step 1/1. Its function is as follows. Catalyzes the reversible transfer of the terminal phosphate group between ATP and AMP. Plays an important role in cellular energy homeostasis and in adenine nucleotide metabolism. The polypeptide is Adenylate kinase (Thermosipho africanus (strain TCF52B)).